Consider the following 246-residue polypeptide: 2-C-methyl-D-erythritol 4-phosphate cytidylyltransferase (246 aa).

This sequence belongs to the IspD/TarI cytidylyltransferase family. IspD subfamily.

It carries out the reaction 2-C-methyl-D-erythritol 4-phosphate + CTP + H(+) = 4-CDP-2-C-methyl-D-erythritol + diphosphate. The protein operates within isoprenoid biosynthesis; isopentenyl diphosphate biosynthesis via DXP pathway; isopentenyl diphosphate from 1-deoxy-D-xylulose 5-phosphate: step 2/6. Functionally, catalyzes the formation of 4-diphosphocytidyl-2-C-methyl-D-erythritol from CTP and 2-C-methyl-D-erythritol 4-phosphate (MEP). The chain is 2-C-methyl-D-erythritol 4-phosphate cytidylyltransferase from Clostridium tetani (strain Massachusetts / E88).